A 224-amino-acid chain; its full sequence is Small ribosomal subunit protein uS3 (224 aa).

Residues 39–107 form the KH type-2 domain; the sequence is IREFLKKKPS…DVWVEIAEVK (69 aa).

The protein belongs to the universal ribosomal protein uS3 family. In terms of assembly, part of the 30S ribosomal subunit. Forms a tight complex with proteins S10 and S14.

Its function is as follows. Binds the lower part of the 30S subunit head. Binds mRNA in the 70S ribosome, positioning it for translation. The sequence is that of Small ribosomal subunit protein uS3 from Chlamydia trachomatis serovar D (strain ATCC VR-885 / DSM 19411 / UW-3/Cx).